The primary structure comprises 207 residues: Acyl-homoserine-lactone synthase (207 aa).

It belongs to the autoinducer synthase family.

It catalyses the reaction a fatty acyl-[ACP] + S-adenosyl-L-methionine = an N-acyl-L-homoserine lactone + S-methyl-5'-thioadenosine + holo-[ACP] + H(+). Required for the synthesis of N-butanoyl-L-homoserine lactone (BHL), an autoinducer molecule which binds to AhyR. The chain is Acyl-homoserine-lactone synthase (ahyI) from Aeromonas hydrophila.